The primary structure comprises 262 residues: Small ribosomal subunit protein uS2 (262 aa).

The tract at residues 228 to 262 (VSNEEVAAEQNIDLDESKEATEAETTEENTSVESN) is disordered.

It belongs to the universal ribosomal protein uS2 family.

The sequence is that of Small ribosomal subunit protein uS2 from Staphylococcus saprophyticus subsp. saprophyticus (strain ATCC 15305 / DSM 20229 / NCIMB 8711 / NCTC 7292 / S-41).